The following is a 261-amino-acid chain: Putative hydro-lyase SAR11_0660 (261 aa).

The protein belongs to the D-glutamate cyclase family.

This Pelagibacter ubique (strain HTCC1062) protein is Putative hydro-lyase SAR11_0660.